The chain runs to 925 residues: MQPSLIPSLLETAAARNGDGRVILYSQGNREDPRSITYRDLLETASKASVAVHNHQNYTPGAAVLLHFNNHLDNIVWFWAVLLAGCIPAITPAFSNNPVQRVANLEHLSSTLITDWCLTSQALLVEFAGQDAIEPVSVETLGWEKASPDSNTASVKAKPTDTALLLFTSGSTGKSKAVCLSHFQIVSAIAGKLSVVPLPEQSSFLNWVGLDHVAAIIEIHLQALYADLDQVHVPGSDVISDPIWFLDLMATHRVSRTFAPNFFLARIRDALVQNARSASPRQWDLSGLRYVASGGEANTTKTCDELSQLLKSFGAPLNVIVPGFGMTETCAGAIFNTNCPDYDKKHGLEYTSVGSCMPGIFMRVTNQQGDPLPPGEMGSLELAGPVVFRQYLNNPAATQESFTMDGWFKTGDCGTLDENGYLVLGGRAKETIIINGVKYSPHEIETAVEEHNIKGLSRSFTCCFSSLSPGAETEEIVLVYLPTYAPEDIPARAATADAISKVVLMSTGSRPHIIPLEQALLPKSTLGKLSRSKIKAAYERGEYRTHDSINRSLIARHRQATRASPKNDFEKGLLEIFLRSFKISEDEFDVQTPIFDVGIDSIELINLKRDIEQHLGFADATIPIIILLENTTVRELAAALDNLYRPKEYNPVVTLQAHGDKNPLWLVHPGAGEVLIFINLAKFITDRPVYALRARGFDEGEKPFDSIEDAVTSYYNGVKSKQPHGPYALAGYCYGSMLAFEVAKKLEENGDEVRFVGSFNLPPHIKMRMRELDWKECLLHLAYFLDLITQKRSRELAVELDGLDQDTILQAIIDEADKERYAQLSLSRPFLSRWADVAYELHRIAGDYDPDGRVASMDVFFSIPLAIAAASKSEWRNVHLSQWDDFTRSHVRFHDVPGEHYSMIGPEHVFAFQKILRSALAERGM.

The adenylation (A) domain stretch occupies residues 11 to 434; that stretch reads ETAAARNGDG…GGRAKETIII (424 aa). In terms of domain architecture, Carrier spans 564 to 644; it reads SPKNDFEKGL…ELAAALDNLY (81 aa). An O-(pantetheine 4'-phosphoryl)serine modification is found at serine 601. Residues 663–923 form a thioesterase (TE) domain region; sequence PLWLVHPGAG…KILRSALAER (261 aa).

It belongs to the NRP synthetase family.

It localises to the cytoplasm. The catalysed reaction is 2 3-(4-hydroxyphenyl)pyruvate + AH2 + 2 ATP + O2 = aspulvinone E + A + 2 AMP + CO2 + 2 diphosphate + H2O + H(+). Its function is as follows. Nonribosomal peptide synthase; part of the gene cluster that mediates the biosynthesis of Asp-melanin, a pigment that confers resistance against UV light and hampers phagocytosis by soil amoeba. The nonribosomal peptide synthase melA converts 4-hydroxyphenylpyruvate (4-HPPA) to aspulvinone E. The tyrosinase tyrP then performs hydroxylations of both aromatic moieties of aspulvinone E. The product of tyrP is highly unstable, and, due to the high reactivity of methides and ortho-diquinones, the polymeric Asp-melanin forms spontaneously. The chain is Aspulvinone E synthetase melA from Aspergillus terreus (strain NIH 2624 / FGSC A1156).